Reading from the N-terminus, the 441-residue chain is Serine hydroxymethyltransferase (441 aa).

Residues Leu-119 and 123–125 (GHL) each bind (6S)-5,6,7,8-tetrahydrofolate. Residue Lys-228 is modified to N6-(pyridoxal phosphate)lysine. A (6S)-5,6,7,8-tetrahydrofolate-binding site is contributed by 370-372 (SPF).

This sequence belongs to the SHMT family. As to quaternary structure, homodimer. Requires pyridoxal 5'-phosphate as cofactor.

The protein localises to the cytoplasm. It carries out the reaction (6R)-5,10-methylene-5,6,7,8-tetrahydrofolate + glycine + H2O = (6S)-5,6,7,8-tetrahydrofolate + L-serine. It functions in the pathway one-carbon metabolism; tetrahydrofolate interconversion. Its pathway is amino-acid biosynthesis; glycine biosynthesis; glycine from L-serine: step 1/1. Catalyzes the reversible interconversion of serine and glycine with tetrahydrofolate (THF) serving as the one-carbon carrier. This reaction serves as the major source of one-carbon groups required for the biosynthesis of purines, thymidylate, methionine, and other important biomolecules. Also exhibits THF-independent aldolase activity toward beta-hydroxyamino acids, producing glycine and aldehydes, via a retro-aldol mechanism. The protein is Serine hydroxymethyltransferase of Chlorobium phaeovibrioides (strain DSM 265 / 1930) (Prosthecochloris vibrioformis (strain DSM 265)).